The chain runs to 53 residues: ATP synthase protein 8 (53 aa).

A helical transmembrane segment spans residues 4–24 (MAPISWLLLFIIFSITFILFC).

The protein belongs to the ATPase protein 8 family. In terms of assembly, F-type ATPases have 2 components, CF(1) - the catalytic core - and CF(0) - the membrane proton channel.

Its subcellular location is the mitochondrion membrane. Functionally, mitochondrial membrane ATP synthase (F(1)F(0) ATP synthase or Complex V) produces ATP from ADP in the presence of a proton gradient across the membrane which is generated by electron transport complexes of the respiratory chain. F-type ATPases consist of two structural domains, F(1) - containing the extramembraneous catalytic core and F(0) - containing the membrane proton channel, linked together by a central stalk and a peripheral stalk. During catalysis, ATP synthesis in the catalytic domain of F(1) is coupled via a rotary mechanism of the central stalk subunits to proton translocation. Part of the complex F(0) domain. Minor subunit located with subunit a in the membrane. This is ATP synthase protein 8 (mt:ATPase8) from Drosophila mauritiana (Fruit fly).